Consider the following 834-residue polypeptide: Probable phosphoenolpyruvate synthase (834 aa).

H447 serves as the catalytic Tele-phosphohistidine intermediate. The substrate site is built by R550, R598, E699, G720, S721, N722, and D723. Residue E699 coordinates Mg(2+). D723 contributes to the Mg(2+) binding site. Residue C772 is the Proton donor of the active site.

This sequence belongs to the PEP-utilizing enzyme family. Homooligomer. Forms a large complex of about 2000 kDa. Mg(2+) is required as a cofactor. The N-terminus is blocked.

The catalysed reaction is pyruvate + ATP + H2O = phosphoenolpyruvate + AMP + phosphate + 2 H(+). It functions in the pathway carbohydrate biosynthesis; gluconeogenesis. Functionally, catalyzes the phosphorylation of pyruvate to phosphoenolpyruvate. The chain is Probable phosphoenolpyruvate synthase (ppsA) from Staphylothermus marinus (strain ATCC 43588 / DSM 3639 / JCM 9404 / F1).